The following is a 142-amino-acid chain: uncharacterized protein (142 aa).

This is an uncharacterized protein from Methanocaldococcus jannaschii (strain ATCC 43067 / DSM 2661 / JAL-1 / JCM 10045 / NBRC 100440) (Methanococcus jannaschii).